The sequence spans 525 residues: MIFSLDEELHRVSLDDKKNDIKVDYSSAIYNDINHEQGSSITYEESINHLSVHSNAIPLNGMSPAHRMRRRSSAYSKFPILTPPNTRRFSITGSDAMRTNTNRLSITPQDIISSNIGENELSRNLHDFKPVRVLGQGAYGKVLLVKDVNTSKLYAMKQLRKAEILISQTATDSKREDEDKNDGNNNDNDDGLSKRLERTFAERSILSEIEHPNIVKLFYSFHDNSKLYLLLQYIPGGELFYHLKEHGTLDETTVSFYAAEISCALRFLHTKGVVYRDLKPENCLLNQRGHLVLTDFGLSKKSANDSAVDEEDPENVNALYSIIGTPEYCAPEILLGKAYSQNCDWYSLGCLLYDMLVGKPPYTGSNHKVIINKIQQNKQGPKIPFYLSEGMKDILNALLKKETAKRWNVDKYWAKTGANNKPTKSKKKKSGAARTSLFTEHFIFRKIDWKLLESGQLQKTTLGPIVPVITDLELAENFDTEFTSMSYEETYTDSKPININSVSKSPDMFKGFSYKASGSYLEKYF.

A phosphoserine mark is found at S90 and S105. At T107 the chain carries Phosphothreonine. A Protein kinase domain is found at 128–424 (FKPVRVLGQG…KTGANNKPTK (297 aa)). ATP-binding positions include 134-142 (LGQGAYGKV) and K157. A disordered region spans residues 170-193 (ATDSKREDEDKNDGNNNDNDDGLS). Over residues 172-182 (DSKREDEDKND) the composition is skewed to basic and acidic residues. D277 acts as the Proton acceptor in catalysis. A Phosphoserine; by PKH1 or PKH2 modification is found at S321. The AGC-kinase C-terminal domain maps to 445 to 524 (RKIDWKLLES…KASGSYLEKY (80 aa)). T490 is modified (phosphothreonine; by TORC1). Phosphoserine; by TORC1 is present on S513.

Belongs to the protein kinase superfamily. AGC Ser/Thr protein kinase family. S6 kinase subfamily. In terms of processing, phosphorylated by PKA in a TORC1-dependent manner. Phosphorylation at PKA consensus sites RRxS/T decreases upon rapamycin treatment.

The protein resides in the cytoplasm. It carries out the reaction L-seryl-[protein] + ATP = O-phospho-L-seryl-[protein] + ADP + H(+). The catalysed reaction is L-threonyl-[protein] + ATP = O-phospho-L-threonyl-[protein] + ADP + H(+). Its function is as follows. AGC kinase which plays a role in TOR complex 1 (TORC1) signaling pathway which mediates temporal control of cell growth in response to nutrients. Required for phosphorylation of ribosomal protein S6 (RPS6A/RPS6B) at 'Ser-232' and 'Ser-233'. This is Serine/threonine-protein kinase YPK3 from Saccharomyces cerevisiae (strain ATCC 204508 / S288c) (Baker's yeast).